A 188-amino-acid polypeptide reads, in one-letter code: Adenine phosphoribosyltransferase (188 aa).

Belongs to the purine/pyrimidine phosphoribosyltransferase family. In terms of assembly, homodimer.

Its subcellular location is the cytoplasm. The enzyme catalyses AMP + diphosphate = 5-phospho-alpha-D-ribose 1-diphosphate + adenine. The protein operates within purine metabolism; AMP biosynthesis via salvage pathway; AMP from adenine: step 1/1. Its function is as follows. Catalyzes a salvage reaction resulting in the formation of AMP, that is energically less costly than de novo synthesis. This chain is Adenine phosphoribosyltransferase, found in Frankia casuarinae (strain DSM 45818 / CECT 9043 / HFP020203 / CcI3).